We begin with the raw amino-acid sequence, 617 residues long: RNA polymerase sigma factor RpoD (617 aa).

The interval 192 to 222 is disordered; the sequence is NITNDSNENEDENEDENEDEDENSIDPELAN. Over residues 198 to 216 the composition is skewed to acidic residues; it reads NENEDENEDENEDEDENSI. The interval 383 to 453 is sigma-70 factor domain-2; sequence MVEANLRLVI…TRSIADQART (71 aa). The Interaction with polymerase core subunit RpoC signature appears at 407 to 410; it reads DLIQ. The interval 462–538 is sigma-70 factor domain-3; it reads ETINKLNRIS…DTTLELPLDS (77 aa). The sigma-70 factor domain-4 stretch occupies residues 551-604; that stretch reads VLSGLTAREAKVLRMRFGIDMNTDHTLEEVGKQFDVTRERIRQIEAKALRKLRH. Residues 577–596 constitute a DNA-binding region (H-T-H motif); the sequence is LEEVGKQFDVTRERIRQIEA.

This sequence belongs to the sigma-70 factor family. RpoD/SigA subfamily. As to quaternary structure, interacts transiently with the RNA polymerase catalytic core.

The protein resides in the cytoplasm. Functionally, sigma factors are initiation factors that promote the attachment of RNA polymerase to specific initiation sites and are then released. This sigma factor is the primary sigma factor during exponential growth. The protein is RNA polymerase sigma factor RpoD of Buchnera aphidicola subsp. Schizaphis graminum (strain Sg).